We begin with the raw amino-acid sequence, 54 residues long: Large ribosomal subunit protein bL33 (54 aa).

Belongs to the bacterial ribosomal protein bL33 family.

The protein is Large ribosomal subunit protein bL33 of Corynebacterium jeikeium (strain K411).